Reading from the N-terminus, the 802-residue chain is Bifunctional purine biosynthetic protein ADE5,7 (802 aa).

Residues methionine 1–isoleucine 450 form a GARS region. An ATP-grasp domain is found at lysine 114–glutamate 330. Glutamine 141–serine 203 is an ATP binding site. The Mg(2+) site is built by glutamate 298 and asparagine 300. Positions threonine 451–tyrosine 802 are AIRS. Residues serine 455 and serine 458 each carry the phosphoserine modification.

This sequence in the N-terminal section; belongs to the GARS family. The protein in the C-terminal section; belongs to the AIR synthase family. Mg(2+) is required as a cofactor. Requires Mn(2+) as cofactor.

The protein resides in the cytoplasm. It catalyses the reaction 5-phospho-beta-D-ribosylamine + glycine + ATP = N(1)-(5-phospho-beta-D-ribosyl)glycinamide + ADP + phosphate + H(+). The catalysed reaction is 2-formamido-N(1)-(5-O-phospho-beta-D-ribosyl)acetamidine + ATP = 5-amino-1-(5-phospho-beta-D-ribosyl)imidazole + ADP + phosphate + H(+). It functions in the pathway purine metabolism; IMP biosynthesis via de novo pathway; 5-amino-1-(5-phospho-D-ribosyl)imidazole from N(2)-formyl-N(1)-(5-phospho-D-ribosyl)glycinamide: step 2/2. Its pathway is purine metabolism; IMP biosynthesis via de novo pathway; N(1)-(5-phospho-D-ribosyl)glycinamide from 5-phospho-alpha-D-ribose 1-diphosphate: step 2/2. In terms of biological role, catalyzes the second and fifth step in the 'de novo' purine biosynthesis pathway; contains phosphoribosylamine--glycine ligase (GARS) and phosphoribosylformylglycinamidine cyclo-ligase (AIRS) activities. This chain is Bifunctional purine biosynthetic protein ADE5,7, found in Saccharomyces cerevisiae (strain ATCC 204508 / S288c) (Baker's yeast).